Consider the following 68-residue polypeptide: Large ribosomal subunit protein uL29 (68 aa).

The protein belongs to the universal ribosomal protein uL29 family.

The chain is Large ribosomal subunit protein uL29 from Limosilactobacillus reuteri (strain DSM 20016) (Lactobacillus reuteri).